Here is a 526-residue protein sequence, read N- to C-terminus: Threonine synthase 1, chloroplastic (526 aa).

The N-terminal 40 residues, 1–40, are a transit peptide targeting the chloroplast; that stretch reads MASSCLFNASVSSLNPKQDPIRRHRSTSLLRHRPVVISCT. Residues 142–144, 165–167, Asn-172, Leu-173, Lys-181, and Asn-187 each bind S-adenosyl-L-methionine; these read PYG and SAF. Residue Lys-203 is modified to N6-(pyridoxal phosphate)lysine. Pyridoxal 5'-phosphate-binding positions include 335–339 and Thr-472; that span reads GNLGN.

The protein belongs to the threonine synthase family. Homodimer. It depends on pyridoxal 5'-phosphate as a cofactor.

It is found in the plastid. It localises to the chloroplast. The catalysed reaction is O-phospho-L-homoserine + H2O = L-threonine + phosphate. It participates in amino-acid biosynthesis; L-threonine biosynthesis; L-threonine from L-aspartate: step 5/5. Allosterically activated by S-adenosyl-L-methionine (SAM). Activated by S-adenosyl-L-ethionine, 5'-amino-5'-deoxyadenosine, sinefungin and 5'-deoxy-5-methylthioadenosine. Inhibited by AMP. Catalyzes the gamma-elimination of phosphate from L-phosphohomoserine and the beta-addition of water to produce L-threonine. This chain is Threonine synthase 1, chloroplastic (TS1), found in Arabidopsis thaliana (Mouse-ear cress).